We begin with the raw amino-acid sequence, 133 residues long: Thioredoxin-2, mitochondrial (133 aa).

Residues 1-29 constitute a mitochondrion transit peptide; the sequence is MRGFIANSLKPHMRSFALRRSFTSSRILR. Residues 30 to 133 form the Thioredoxin domain; sequence KVNAVESFGD…LSSLLAKYQE (104 aa). Active-site nucleophile residues include Cys-59 and Cys-62. Cysteines 59 and 62 form a disulfide.

This sequence belongs to the thioredoxin family. In terms of assembly, interacts with arg3.

It localises to the mitochondrion. Disulfide reductase which serves multiple functions in mitochondria, protecting mitochondrial components against thiol-oxidative damage as a thiol-disulfide oxidoreductase, and supporting urea cycle and respiration in mitochondria in a manner independent of active site thiols. This Schizosaccharomyces pombe (strain 972 / ATCC 24843) (Fission yeast) protein is Thioredoxin-2, mitochondrial (trx2).